The sequence spans 537 residues: CTP synthase (537 aa).

The tract at residues 1 to 267 (MTKYIFVTGG…DQIVCDHLKL (267 aa)) is amidoligase domain. CTP is bound at residue Ser13. Position 13 (Ser13) interacts with UTP. An ATP-binding site is contributed by 14-19 (SIGKGI). Tyr54 contacts L-glutamine. Residue Asp71 participates in ATP binding. Positions 71 and 141 each coordinate Mg(2+). Residues 148–150 (DIE), 188–193 (KTKPTQ), and Lys224 each bind CTP. UTP contacts are provided by residues 188-193 (KTKPTQ) and Lys224. 240–242 (RDV) serves as a coordination point for ATP. The 244-residue stretch at 292-535 (RIALVGKYVE…VTAAVKNKNQ (244 aa)) folds into the Glutamine amidotransferase type-1 domain. Residue Gly354 coordinates L-glutamine. The active-site Nucleophile; for glutamine hydrolysis is the Cys381. L-glutamine contacts are provided by residues 382 to 385 (LGMQ), Glu405, and Arg463. Catalysis depends on residues His508 and Glu510.

It belongs to the CTP synthase family. As to quaternary structure, homotetramer.

It catalyses the reaction UTP + L-glutamine + ATP + H2O = CTP + L-glutamate + ADP + phosphate + 2 H(+). The catalysed reaction is L-glutamine + H2O = L-glutamate + NH4(+). The enzyme catalyses UTP + NH4(+) + ATP = CTP + ADP + phosphate + 2 H(+). It participates in pyrimidine metabolism; CTP biosynthesis via de novo pathway; CTP from UDP: step 2/2. Its activity is regulated as follows. Allosterically activated by GTP, when glutamine is the substrate; GTP has no effect on the reaction when ammonia is the substrate. The allosteric effector GTP functions by stabilizing the protein conformation that binds the tetrahedral intermediate(s) formed during glutamine hydrolysis. Inhibited by the product CTP, via allosteric rather than competitive inhibition. In terms of biological role, catalyzes the ATP-dependent amination of UTP to CTP with either L-glutamine or ammonia as the source of nitrogen. Regulates intracellular CTP levels through interactions with the four ribonucleotide triphosphates. The protein is CTP synthase of Streptococcus equi subsp. equi (strain 4047).